A 152-amino-acid chain; its full sequence is Xanthine-guanine phosphoribosyltransferase (152 aa).

5-phospho-alpha-D-ribose 1-diphosphate is bound by residues 37–38 (RG), arginine 69, and 88–96 (DDLVDTGGT). Arginine 69 contributes to the GMP binding site. Aspartate 89 serves as a coordination point for Mg(2+). Guanine contacts are provided by aspartate 92 and isoleucine 135. Xanthine contacts are provided by aspartate 92 and isoleucine 135. Residues 92–96 (DTGGT) and 134–135 (WI) contribute to the GMP site.

It belongs to the purine/pyrimidine phosphoribosyltransferase family. XGPT subfamily. Homotetramer. The cofactor is Mg(2+).

Its subcellular location is the cell inner membrane. The enzyme catalyses GMP + diphosphate = guanine + 5-phospho-alpha-D-ribose 1-diphosphate. It catalyses the reaction XMP + diphosphate = xanthine + 5-phospho-alpha-D-ribose 1-diphosphate. The catalysed reaction is IMP + diphosphate = hypoxanthine + 5-phospho-alpha-D-ribose 1-diphosphate. It participates in purine metabolism; GMP biosynthesis via salvage pathway; GMP from guanine: step 1/1. Its pathway is purine metabolism; XMP biosynthesis via salvage pathway; XMP from xanthine: step 1/1. Its function is as follows. Purine salvage pathway enzyme that catalyzes the transfer of the ribosyl-5-phosphate group from 5-phospho-alpha-D-ribose 1-diphosphate (PRPP) to the N9 position of the 6-oxopurines guanine and xanthine to form the corresponding ribonucleotides GMP (guanosine 5'-monophosphate) and XMP (xanthosine 5'-monophosphate), with the release of PPi. To a lesser extent, also acts on hypoxanthine. In Shigella boydii serotype 4 (strain Sb227), this protein is Xanthine-guanine phosphoribosyltransferase.